A 149-amino-acid polypeptide reads, in one-letter code: UPF0178 protein VFMJ11_0615 (149 aa).

Belongs to the UPF0178 family.

The polypeptide is UPF0178 protein VFMJ11_0615 (Aliivibrio fischeri (strain MJ11) (Vibrio fischeri)).